Here is a 413-residue protein sequence, read N- to C-terminus: N-acylneuraminate cytidylyltransferase (413 aa).

The protein belongs to the CMP-NeuNAc synthase family. It depends on Mg(2+) as a cofactor. The cofactor is Mn(2+).

The protein localises to the cytoplasm. It catalyses the reaction an N-acylneuraminate + CTP = a CMP-N-acyl-beta-neuraminate + diphosphate. Functionally, catalyzes the formation of CMP-N-acetylneuraminic acid (CMP-NeuNAc), which is essential for the formation of the capsule. The polypeptide is N-acylneuraminate cytidylyltransferase (neuA) (Streptococcus agalactiae serotype Ia (strain ATCC 27591 / A909 / CDC SS700)).